The sequence spans 494 residues: Alpha-amylase 2 (494 aa).

A signal peptide spans 1–18 (MFLAKSIVCLALLAVANA). The cysteines at positions 46 and 102 are disulfide-linked. Ca(2+)-binding residues include Asn116, Arg165, and Asp174. Cysteines 153 and 167 form a disulfide. Arg202 contacts chloride. The active-site Nucleophile is the Asp204. His208 contributes to the Ca(2+) binding site. Glu241 serves as the catalytic Proton donor. Chloride contacts are provided by Asn304 and Arg343. Residues 350-370 (FTDTDQGPPTTDGQNIASPSF) are disordered. The span at 351-363 (TDTDQGPPTTDGQ) shows a compositional bias: low complexity. Cystine bridges form between Cys376/Cys382 and Cys448/Cys460.

Belongs to the glycosyl hydrolase 13 family. In terms of assembly, monomer. Ca(2+) serves as cofactor. Chloride is required as a cofactor.

The enzyme catalyses Endohydrolysis of (1-&gt;4)-alpha-D-glucosidic linkages in polysaccharides containing three or more (1-&gt;4)-alpha-linked D-glucose units.. The sequence is that of Alpha-amylase 2 (Amy58) from Drosophila ananassae (Fruit fly).